A 776-amino-acid polypeptide reads, in one-letter code: 1,4-alpha-glucan branching enzyme GlgB (776 aa).

Aspartate 431 acts as the Nucleophile in catalysis. Glutamate 484 acts as the Proton donor in catalysis.

It belongs to the glycosyl hydrolase 13 family. GlgB subfamily. Monomer.

The catalysed reaction is Transfers a segment of a (1-&gt;4)-alpha-D-glucan chain to a primary hydroxy group in a similar glucan chain.. It participates in glycan biosynthesis; glycogen biosynthesis. Catalyzes the formation of the alpha-1,6-glucosidic linkages in glycogen by scission of a 1,4-alpha-linked oligosaccharide from growing alpha-1,4-glucan chains and the subsequent attachment of the oligosaccharide to the alpha-1,6 position. This is 1,4-alpha-glucan branching enzyme GlgB from Trichodesmium erythraeum (strain IMS101).